The chain runs to 627 residues: Protein zyg-11 homolog A (627 aa).

LRR repeat units lie at residues 123–146 (LPNLGSLDISNTLVTNISALLSCK), 203–227 (LPNLTSLDISGGTDVTDQAVESFLQ), and 409–432 (ITSILALKLSPEEMGQLQEELIMA).

The protein belongs to the zyg-11 family.

Probably acts as a target recruitment subunit in an E3 ubiquitin ligase complex ZYGA-CUL2-elongin BC. The sequence is that of Protein zyg-11 homolog A (Zyg11a) from Mus musculus (Mouse).